The following is an 89-amino-acid chain: Small ribosomal subunit protein uS15 (89 aa).

The protein belongs to the universal ribosomal protein uS15 family. As to quaternary structure, part of the 30S ribosomal subunit. Forms a bridge to the 50S subunit in the 70S ribosome, contacting the 23S rRNA.

Functionally, one of the primary rRNA binding proteins, it binds directly to 16S rRNA where it helps nucleate assembly of the platform of the 30S subunit by binding and bridging several RNA helices of the 16S rRNA. In terms of biological role, forms an intersubunit bridge (bridge B4) with the 23S rRNA of the 50S subunit in the ribosome. This Corynebacterium efficiens (strain DSM 44549 / YS-314 / AJ 12310 / JCM 11189 / NBRC 100395) protein is Small ribosomal subunit protein uS15.